The following is a 508-amino-acid chain: Methionine--tRNA ligase (508 aa).

The 'HIGH' region motif lies at 12 to 22 (YYVNDIPHIGH). A 'KMSKS' region motif is present at residues 295-299 (KISKS). Lys-298 is a binding site for ATP.

It belongs to the class-I aminoacyl-tRNA synthetase family. MetG type 2B subfamily. Monomer.

It is found in the cytoplasm. It carries out the reaction tRNA(Met) + L-methionine + ATP = L-methionyl-tRNA(Met) + AMP + diphosphate. Is required not only for elongation of protein synthesis but also for the initiation of all mRNA translation through initiator tRNA(fMet) aminoacylation. The protein is Methionine--tRNA ligase of Rickettsia conorii (strain ATCC VR-613 / Malish 7).